The chain runs to 118 residues: Holo-[acyl-carrier-protein] synthase (118 aa).

Residues Asp-8 and Glu-58 each coordinate Mg(2+).

It belongs to the P-Pant transferase superfamily. AcpS family. It depends on Mg(2+) as a cofactor.

The protein localises to the cytoplasm. The catalysed reaction is apo-[ACP] + CoA = holo-[ACP] + adenosine 3',5'-bisphosphate + H(+). Its function is as follows. Transfers the 4'-phosphopantetheine moiety from coenzyme A to a Ser of acyl-carrier-protein. This chain is Holo-[acyl-carrier-protein] synthase, found in Listeria monocytogenes serotype 4a (strain HCC23).